Here is a 112-residue protein sequence, read N- to C-terminus: MEKKELYDGFLTLEKHAQQMLREIAAMKDDMAETLERNAELEIENKHLRQHLAELEKDDNKTSDGGVELSKSKQNLESLYNEGFHVCPMFYGQRRVNDEPCAFCTEIIYGEN.

Zn(2+) is bound by residues H85, C87, C101, and C104.

The protein belongs to the YabA family. In terms of assembly, homotetramer. Interacts with both DnaA and DnaN, acting as a bridge between these two proteins. Zn(2+) is required as a cofactor.

It localises to the cytoplasm. The protein resides in the nucleoid. Involved in control of chromosome replication initiation. Inhibits the cooperative binding of DnaA to the oriC region, thus negatively regulating initiation of chromosome replication. Inhibits the ability of DnaA-ATP to form a helix on DNA; does not disassemble preformed DnaA-DNA helices. Decreases the residence time of DnaA on the chromosome at its binding sites (oriC, replication forks and promoter-binding sites). Tethers DnaA to the replication machinery via the DNA polymerase beta sliding clamp subunit (dnaN). Associates with oriC and other DnaA targets on the chromosome in a DnaA-dependent manner. The polypeptide is Replication initiation control protein YabA (Lacticaseibacillus casei (strain BL23) (Lactobacillus casei)).